The primary structure comprises 682 residues: MELLRTITYQPAAGTKMCEQALGKACGGDSKKKRPQQPSEDGQSQAQVTPAAPHHHHHHSHSGPEISRIIVDPTTGKRYCRGKVLGKGGFAKCYEMTDLTNNKVYAAKIIPHSRVAKPHQREKIDKEIELHRILHHKHVVQFYHYFEDKENIYILLEYCSRRSMAHILKARKVLTEPEVRYYLRQIVSGLKYLHEQEILHRDLKLGNFFINEAMELKVGDFGLAARLEPLEHRRRTICGTPNYLSPEVLNKQGHGCESDIWALGCVMYTMLLGRPPFETTNLKETYRCIREARYTMPSSLLAPAKHLIASMLSKNPEDRPSLDDIIRHDFFLQGFTPDRLSSSCCHTVPDFHLSSPAKNFFKKAAAALFGGKKDKARYNDTHNKVSKEDEDIYKLRHDLKKTSITQQPSKHRTDEELQPPPTTFAKSGTSAVENKQQIGDAIRMIVRGTLGSCSSSSECLEDSTMGSVADTVARVLRGCLENMPEADCIPKEQLSTSFQWVTKWVDYSNKYGFGYQLSDHTVGVLFNNGAHMSLLPDKKTVHYYAELGQCSVFPATDAPEQFISQVTVLKYFSHYMEENLMDGGDLPSVTDIRRPRLYLLQWLKSDKALMMLFNDGTFQVNFYHDHTKIIICNQNEEYLLTYINEDRISTTFRLTTLLMSGCSLELKHRMEYALNMLLQRCN.

The interval 25–67 is disordered; it reads ACGGDSKKKRPQQPSEDGQSQAQVTPAAPHHHHHHSHSGPEIS. Positions 36–48 are enriched in polar residues; sequence QQPSEDGQSQAQV. A Protein kinase domain is found at 79–331; sequence YCRGKVLGKG…LDDIIRHDFF (253 aa). ATP contacts are provided by residues 85-93 and Lys108; that span reads LGKGGFAKC. Residue Asp202 is the Proton acceptor of the active site. Thr236 bears the Phosphothreonine mark. The interval 402–430 is disordered; it reads TSITQQPSKHRTDEELQPPPTTFAKSGTS. POLO box domains are found at residues 500–578 and 598–682; these read WVTK…YMEE and YLLQ…QRCN.

Belongs to the protein kinase superfamily. Ser/Thr protein kinase family. CDC5/Polo subfamily. In terms of assembly, interacts with CIB1. Interacts with NSF; causing NSF dissociation from GRIA2. Catalytic activity is enhanced by phosphorylation of Thr-236.

The protein resides in the cytoplasm. It is found in the cytoskeleton. The protein localises to the microtubule organizing center. It localises to the centrosome. Its subcellular location is the centriole. The protein resides in the cell projection. It is found in the dendrite. The enzyme catalyses L-seryl-[protein] + ATP = O-phospho-L-seryl-[protein] + ADP + H(+). It carries out the reaction L-threonyl-[protein] + ATP = O-phospho-L-threonyl-[protein] + ADP + H(+). Activated by phosphorylation of Thr-236. Once activated, activity is stimulated by binding target proteins. In terms of biological role, tumor suppressor serine/threonine-protein kinase involved in synaptic plasticity, centriole duplication and G1/S phase transition. Polo-like kinases act by binding and phosphorylating proteins that are already phosphorylated on a specific motif recognized by the POLO box domains. Phosphorylates CPAP, NPM1, RAPGEF2, RASGRF1, SNCA, SIPA1L1 and SYNGAP1. Plays a key role in synaptic plasticity and memory by regulating the Ras and Rap protein signaling: required for overactivity-dependent spine remodeling by phosphorylating the Ras activator RASGRF1 and the Rap inhibitor SIPA1L1 leading to their degradation by the proteasome. Conversely, phosphorylates the Rap activator RAPGEF2 and the Ras inhibitor SYNGAP1, promoting their activity. Also regulates synaptic plasticity independently of kinase activity, via its interaction with NSF that disrupts the interaction between NSF and the GRIA2 subunit of AMPARs, leading to a rapid rundown of AMPAR-mediated current that occludes long term depression. Required for procentriole formation and centriole duplication by phosphorylating CPAP and NPM1, respectively. Its induction by p53/TP53 suggests that it may participate in the mitotic checkpoint following stress. The chain is Serine/threonine-protein kinase PLK2 (Plk2) from Rattus norvegicus (Rat).